We begin with the raw amino-acid sequence, 336 residues long: Ketol-acid reductoisomerase (NADP(+)) 1 (336 aa).

The region spanning 2–181 (AKVYYEKDVT…GATRAGVLET (180 aa)) is the KARI N-terminal Rossmann domain. Residues 25–28 (YGSQ), R48, S52, and 82–85 (DELQ) contribute to the NADP(+) site. H107 is an active-site residue. G133 contributes to the NADP(+) binding site. Residues 182 to 327 (TFKEETETDL…RKLREMMPFV (146 aa)) enclose the KARI C-terminal knotted domain. Mg(2+) contacts are provided by D190, E194, E226, and E230. Residue S251 coordinates substrate.

This sequence belongs to the ketol-acid reductoisomerase family. The cofactor is Mg(2+).

It catalyses the reaction (2R)-2,3-dihydroxy-3-methylbutanoate + NADP(+) = (2S)-2-acetolactate + NADPH + H(+). The catalysed reaction is (2R,3R)-2,3-dihydroxy-3-methylpentanoate + NADP(+) = (S)-2-ethyl-2-hydroxy-3-oxobutanoate + NADPH + H(+). Its pathway is amino-acid biosynthesis; L-isoleucine biosynthesis; L-isoleucine from 2-oxobutanoate: step 2/4. It participates in amino-acid biosynthesis; L-valine biosynthesis; L-valine from pyruvate: step 2/4. In terms of biological role, involved in the biosynthesis of branched-chain amino acids (BCAA). Catalyzes an alkyl-migration followed by a ketol-acid reduction of (S)-2-acetolactate (S2AL) to yield (R)-2,3-dihydroxy-isovalerate. In the isomerase reaction, S2AL is rearranged via a Mg-dependent methyl migration to produce 3-hydroxy-3-methyl-2-ketobutyrate (HMKB). In the reductase reaction, this 2-ketoacid undergoes a metal-dependent reduction by NADPH to yield (R)-2,3-dihydroxy-isovalerate. This Bacillus cereus (strain ATCC 14579 / DSM 31 / CCUG 7414 / JCM 2152 / NBRC 15305 / NCIMB 9373 / NCTC 2599 / NRRL B-3711) protein is Ketol-acid reductoisomerase (NADP(+)) 1.